A 263-amino-acid polypeptide reads, in one-letter code: Endonuclease 8 (263 aa).

Pro-2 acts as the Schiff-base intermediate with DNA in catalysis. Glu-3 serves as the catalytic Proton donor. Residue Lys-53 is the Proton donor; for beta-elimination activity of the active site. 3 residues coordinate DNA: Gln-70, Arg-125, and Asn-169. The FPG-type zinc finger occupies 229–263; it reads KVFHRDGEPCERCGSIIEKTTLSSRPFYWCPGCQH. Arg-253 (proton donor; for delta-elimination activity) is an active-site residue.

This sequence belongs to the FPG family. Requires Zn(2+) as cofactor.

The enzyme catalyses 2'-deoxyribonucleotide-(2'-deoxyribose 5'-phosphate)-2'-deoxyribonucleotide-DNA = a 3'-end 2'-deoxyribonucleotide-(2,3-dehydro-2,3-deoxyribose 5'-phosphate)-DNA + a 5'-end 5'-phospho-2'-deoxyribonucleoside-DNA + H(+). Involved in base excision repair of DNA damaged by oxidation or by mutagenic agents. Acts as a DNA glycosylase that recognizes and removes damaged bases. Has a preference for oxidized pyrimidines, such as thymine glycol, 5,6-dihydrouracil and 5,6-dihydrothymine. Has AP (apurinic/apyrimidinic) lyase activity and introduces nicks in the DNA strand. Cleaves the DNA backbone by beta-delta elimination to generate a single-strand break at the site of the removed base with both 3'- and 5'-phosphates. This Shigella sonnei (strain Ss046) protein is Endonuclease 8.